The chain runs to 412 residues: Alpha-1-antitrypsin 1-3 (412 aa).

A signal peptide spans 1–24 (MTPSISWGLLLLAGLCCLVPSFLA). Asparagine 64, asparagine 101, and asparagine 265 each carry an N-linked (GlcNAc...) asparagine glycan. The tract at residues 368 to 387 (AVTVLLAVPYSMPPILRFDH) is RCL.

The protein belongs to the serpin family.

It is found in the secreted. Functionally, inhibitor of serine proteases. Can inhibit trypsin and chymotrypsin; relatively ineffective against elastase. The polypeptide is Alpha-1-antitrypsin 1-3 (Serpina1c) (Mus musculus (Mouse)).